A 155-amino-acid polypeptide reads, in one-letter code: Putative pre-16S rRNA nuclease (155 aa).

Belongs to the YqgF nuclease family.

It localises to the cytoplasm. Its function is as follows. Could be a nuclease involved in processing of the 5'-end of pre-16S rRNA. This is Putative pre-16S rRNA nuclease from Wolbachia sp. subsp. Drosophila simulans (strain wRi).